Consider the following 150-residue polypeptide: Large ribosomal subunit protein bL9 (150 aa).

This sequence belongs to the bacterial ribosomal protein bL9 family.

Binds to the 23S rRNA. The protein is Large ribosomal subunit protein bL9 of Shewanella sp. (strain MR-4).